The chain runs to 629 residues: uncharacterized protein (629 aa).

The active-site Proton acceptor is His-562.

Belongs to the GMC oxidoreductase family. It depends on FAD as a cofactor.

This is an uncharacterized protein from Mycobacterium tuberculosis (strain CDC 1551 / Oshkosh).